We begin with the raw amino-acid sequence, 235 residues long: tRNA (guanine-N(1)-)-methyltransferase (235 aa).

Residues Gly-114 and 134 to 139 each bind S-adenosyl-L-methionine; that span reads VGDYIL.

Belongs to the RNA methyltransferase TrmD family. In terms of assembly, homodimer.

The protein resides in the cytoplasm. The enzyme catalyses guanosine(37) in tRNA + S-adenosyl-L-methionine = N(1)-methylguanosine(37) in tRNA + S-adenosyl-L-homocysteine + H(+). Functionally, specifically methylates guanosine-37 in various tRNAs. The sequence is that of tRNA (guanine-N(1)-)-methyltransferase from Chelativorans sp. (strain BNC1).